A 94-amino-acid chain; its full sequence is UPF0235 protein TON_0641 (94 aa).

This sequence belongs to the UPF0235 family.

The chain is UPF0235 protein TON_0641 from Thermococcus onnurineus (strain NA1).